The following is a 414-amino-acid chain: Glucose-1-phosphate adenylyltransferase (414 aa).

Alpha-D-glucose 1-phosphate contacts are provided by residues Tyr-103, Gly-168, Glu-183–Lys-184, and Ser-201.

This sequence belongs to the bacterial/plant glucose-1-phosphate adenylyltransferase family. In terms of assembly, homotetramer.

The enzyme catalyses alpha-D-glucose 1-phosphate + ATP + H(+) = ADP-alpha-D-glucose + diphosphate. It participates in glycan biosynthesis; glycogen biosynthesis. Its function is as follows. Involved in the biosynthesis of ADP-glucose, a building block required for the elongation reactions to produce glycogen. Catalyzes the reaction between ATP and alpha-D-glucose 1-phosphate (G1P) to produce pyrophosphate and ADP-Glc. The protein is Glucose-1-phosphate adenylyltransferase of Thermus thermophilus (strain ATCC 27634 / DSM 579 / HB8).